We begin with the raw amino-acid sequence, 224 residues long: 3-dehydroquinate dehydratase (224 aa).

3-dehydroquinate contacts are provided by residues 30 to 32 (EWR) and Arg-62. Catalysis depends on His-118, which acts as the Proton donor/acceptor. The Schiff-base intermediate with substrate role is filled by Lys-143. Positions 186, 205, and 209 each coordinate 3-dehydroquinate.

Belongs to the type-I 3-dehydroquinase family. As to quaternary structure, homodimer.

It carries out the reaction 3-dehydroquinate = 3-dehydroshikimate + H2O. Its pathway is metabolic intermediate biosynthesis; chorismate biosynthesis; chorismate from D-erythrose 4-phosphate and phosphoenolpyruvate: step 3/7. Its function is as follows. Involved in the third step of the chorismate pathway, which leads to the biosynthesis of aromatic amino acids. Catalyzes the cis-dehydration of 3-dehydroquinate (DHQ) and introduces the first double bond of the aromatic ring to yield 3-dehydroshikimate. This Streptococcus suis (strain 98HAH33) protein is 3-dehydroquinate dehydratase.